Consider the following 583-residue polypeptide: MENIIWQCLLYLSLLTALAWPLGKYIGKVMDGEPFWLQRALAPCERALYRLMGVDPAEQMGWKCYMACVIAFSAVSLVALTALLMAQHLLPLNPRNVSGASWHLALNTAISFVTNTNWQSYAGESTMSYLSQMAGLTVQNFVSAAVGIAVLFALIRGVRASGGIGLGNFWADATRAVLYILLPLSLVMSLLLIEQGVPQNFTDYRAAALLEPLAAEDGAPITHQLVPMGPQASQVSPKQLGTNGGGFNGVNSAHPHENPTPASNMLEMLALLLIPAALCFTFGAKIGDMRQGVAIFAAMFILLTSAVSFTVQAELNATPQIAQGGQVLVAPQSGLQGQAGGNMEGKETRFGIAGSALWASATTAVSNGSVNAMHDSFTPLGGMIPMVLMQLGEVIFGGVGSGLYGMLAFVLLTVFLAGLMVGRTPEYLGKKIEPFEMKMAVVVCLTTPVVILAGGGLMCLAPQIVDSLNNPLPHGFSEILYAATSAGANNGSAFAGLNANTPFLNVLLGVLMLAGRFAPIAAILAMADGLAGKKICPPGAGTLSTCNGLFIFLLIFVILLVGALSFFPALALGPLAEHLQMTR.

Transmembrane regions (helical) follow at residues Asn3–Gly23, Met66–Ala86, Gly135–Ile155, Val177–Val197, Leu266–Ile286, Val293–Ala313, Gly402–Gly422, Ala440–Leu460, Val506–Met526, and Leu549–Ala569.

Belongs to the KdpA family. The system is composed of three essential subunits: KdpA, KdpB and KdpC.

The protein resides in the cell inner membrane. Its function is as follows. Part of the high-affinity ATP-driven potassium transport (or Kdp) system, which catalyzes the hydrolysis of ATP coupled with the electrogenic transport of potassium into the cytoplasm. This subunit binds the periplasmic potassium ions and delivers the ions to the membrane domain of KdpB through an intramembrane tunnel. This Desulfovibrio desulfuricans (strain ATCC 27774 / DSM 6949 / MB) protein is Potassium-transporting ATPase potassium-binding subunit.